A 437-amino-acid polypeptide reads, in one-letter code: Septin-7 (437 aa).

N-acetylserine is present on Ser2. Position 30 is a phosphotyrosine (Tyr30). A Septin-type G domain is found at 47 to 316; it reads RGFEFTLMVV…ENYRSRKLAA (270 aa). Positions 47–317 are interaction with SEPTIN12; the sequence is RGFEFTLMVV…NYRSRKLAAV (271 aa). Residues 57-64 form a G1 motif region; the sequence is GESGLGKS. 57–64 is a binding site for GTP; it reads GESGLGKS. Phosphoserine is present on Ser77. Residues Thr90, Gly116, and 195–203 each bind GTP; that span reads KADTLTPEE. The segment at 113–116 is G3 motif; sequence DTPG. The interval 194–197 is G4 motif; sequence AKAD. Thr228 is modified (phosphothreonine). Residues Gly250 and Arg265 each coordinate GTP. A coiled-coil region spans residues 332-433; that stretch reads TKSPLAQMEE…SRTLEKNKKK (102 aa). The residue at position 334 (Ser334) is a Phosphoserine. Residue Lys373 is modified to N6-acetyllysine. Residues 378–410 show a composition bias toward basic and acidic residues; sequence ELQRRHEQMKKNLEAQHKELEEKRRQFEDEKAN. Residues 378-437 form a disordered region; that stretch reads ELQRRHEQMKKNLEAQHKELEEKRRQFEDEKANWEAQQRILEQQNSSRTLEKNKKKGKIF. Residue Ser424 is modified to Phosphoserine. Thr426 carries the phosphothreonine modification.

Belongs to the TRAFAC class TrmE-Era-EngA-EngB-Septin-like GTPase superfamily. Septin GTPase family. Septins polymerize into heterooligomeric protein complexes that form filaments, and associate with cellular membranes, actin filaments and microtubules. GTPase activity is required for filament formation. Filaments are assembled from asymmetrical heterotrimers, composed of SEPTIN2, SEPTIN6 and SEPTIN7 that associate head-to-head to form a hexameric unit. Within the trimer, directly interacts with SEPTIN6, while interaction with SEPTIN2 seems indirect. In the absence of SEPTIN6, forms homodimers. Interacts directly with CENPE and links CENPE to septin filaments composed of SEPTIN2, SEPTIN6 and SEPTIN7. Interacts with SEPTIN5, SEPTIN8, SEPTIN9 and SEPTIN11. Component of a septin core octameric complex consisting of SEPTIN12, SEPTIN7, SEPTIN6 and SEPTIN2 or SEPTIN4 in the order 12-7-6-2-2-6-7-12 or 12-7-6-4-4-6-7-12 and located in the sperm annulus; the SEPTIN12:SEPTIN7 association is mediated by the respective GTP-binding domains.

It is found in the cytoplasm. The protein localises to the chromosome. Its subcellular location is the centromere. The protein resides in the kinetochore. It localises to the cytoskeleton. It is found in the spindle. The protein localises to the cleavage furrow. Its subcellular location is the midbody. The protein resides in the cilium axoneme. It localises to the cell projection. It is found in the cilium. The protein localises to the flagellum. Filament-forming cytoskeletal GTPase. Required for normal organization of the actin cytoskeleton. Required for normal progress through mitosis. Involved in cytokinesis. Required for normal association of CENPE with the kinetochore. Plays a role in ciliogenesis and collective cell movements. Forms a filamentous structure with SEPTIN12, SEPTIN6, SEPTIN2 and probably SEPTIN4 at the sperm annulus which is required for the structural integrity and motility of the sperm tail during postmeiotic differentiation. The protein is Septin-7 of Bos taurus (Bovine).